A 209-amino-acid polypeptide reads, in one-letter code: Imidazoleglycerol-phosphate dehydratase (209 aa).

The tract at residues 1-23 (MQLSDRPLTAPGTAPRQATVSRR) is disordered.

It belongs to the imidazoleglycerol-phosphate dehydratase family.

It localises to the cytoplasm. The enzyme catalyses D-erythro-1-(imidazol-4-yl)glycerol 3-phosphate = 3-(imidazol-4-yl)-2-oxopropyl phosphate + H2O. Its pathway is amino-acid biosynthesis; L-histidine biosynthesis; L-histidine from 5-phospho-alpha-D-ribose 1-diphosphate: step 6/9. The sequence is that of Imidazoleglycerol-phosphate dehydratase from Synechococcus elongatus (strain ATCC 33912 / PCC 7942 / FACHB-805) (Anacystis nidulans R2).